The chain runs to 431 residues: Serine--tRNA ligase (431 aa).

An L-serine-binding site is contributed by 235 to 237 (TSE). An ATP-binding site is contributed by 266 to 268 (RSE). Glu-289 contributes to the L-serine binding site. 353-356 (EISS) is an ATP binding site. Ser-388 is an L-serine binding site.

It belongs to the class-II aminoacyl-tRNA synthetase family. Type-1 seryl-tRNA synthetase subfamily. In terms of assembly, homodimer. The tRNA molecule binds across the dimer.

It localises to the cytoplasm. It catalyses the reaction tRNA(Ser) + L-serine + ATP = L-seryl-tRNA(Ser) + AMP + diphosphate + H(+). The catalysed reaction is tRNA(Sec) + L-serine + ATP = L-seryl-tRNA(Sec) + AMP + diphosphate + H(+). Its pathway is aminoacyl-tRNA biosynthesis; selenocysteinyl-tRNA(Sec) biosynthesis; L-seryl-tRNA(Sec) from L-serine and tRNA(Sec): step 1/1. Its function is as follows. Catalyzes the attachment of serine to tRNA(Ser). Is also able to aminoacylate tRNA(Sec) with serine, to form the misacylated tRNA L-seryl-tRNA(Sec), which will be further converted into selenocysteinyl-tRNA(Sec). The chain is Serine--tRNA ligase from Paraburkholderia phytofirmans (strain DSM 17436 / LMG 22146 / PsJN) (Burkholderia phytofirmans).